A 721-amino-acid polypeptide reads, in one-letter code: Glycine--tRNA ligase beta subunit (721 aa).

It belongs to the class-II aminoacyl-tRNA synthetase family. As to quaternary structure, tetramer of two alpha and two beta subunits.

Its subcellular location is the cytoplasm. The catalysed reaction is tRNA(Gly) + glycine + ATP = glycyl-tRNA(Gly) + AMP + diphosphate. The sequence is that of Glycine--tRNA ligase beta subunit from Sinorhizobium medicae (strain WSM419) (Ensifer medicae).